The chain runs to 340 residues: UDP-3-O-(3-hydroxymyristoyl)glucosamine N-acyltransferase (340 aa).

The active-site Proton acceptor is the H239.

Belongs to the transferase hexapeptide repeat family. LpxD subfamily. Homotrimer.

It catalyses the reaction a UDP-3-O-[(3R)-3-hydroxyacyl]-alpha-D-glucosamine + a (3R)-hydroxyacyl-[ACP] = a UDP-2-N,3-O-bis[(3R)-3-hydroxyacyl]-alpha-D-glucosamine + holo-[ACP] + H(+). The enzyme catalyses UDP-3-O-[(3R)-3-hydroxytetradecanoyl]-alpha-D-glucosamine + (3R)-hydroxytetradecanoyl-[ACP] = UDP-2-N,3-O-bis[(3R)-3-hydroxytetradecanoyl]-alpha-D-glucosamine + holo-[ACP] + H(+). It participates in glycolipid biosynthesis; lipid IV(A) biosynthesis; lipid IV(A) from (3R)-3-hydroxytetradecanoyl-[acyl-carrier-protein] and UDP-N-acetyl-alpha-D-glucosamine: step 3/6. Its function is as follows. Catalyzes the N-acylation of UDP-3-O-(hydroxytetradecanoyl)glucosamine using 3-hydroxytetradecanoyl-ACP as the acyl donor. Is involved in the biosynthesis of lipid A, a phosphorylated glycolipid that anchors the lipopolysaccharide to the outer membrane of the cell. This Yersinia enterocolitica protein is UDP-3-O-(3-hydroxymyristoyl)glucosamine N-acyltransferase.